A 550-amino-acid chain; its full sequence is Membrane protein insertase YidC (550 aa).

6 consecutive transmembrane segments (helical) span residues 6–26 (LVLF…WLKQ), 333–353 (VVDY…LSWI), 356–376 (VVGN…LMFF), 430–450 (LPIL…LGSV), 469–489 (PYFI…KLNP), and 504–524 (PVIF…YWVV).

Belongs to the OXA1/ALB3/YidC family. Type 1 subfamily. In terms of assembly, interacts with the Sec translocase complex via SecD. Specifically interacts with transmembrane segments of nascent integral membrane proteins during membrane integration.

It localises to the cell inner membrane. Its function is as follows. Required for the insertion and/or proper folding and/or complex formation of integral membrane proteins into the membrane. Involved in integration of membrane proteins that insert both dependently and independently of the Sec translocase complex, as well as at least some lipoproteins. Aids folding of multispanning membrane proteins. The polypeptide is Membrane protein insertase YidC (Aromatoleum aromaticum (strain DSM 19018 / LMG 30748 / EbN1) (Azoarcus sp. (strain EbN1))).